Consider the following 155-residue polypeptide: Ribosomal RNA large subunit methyltransferase H (155 aa).

S-adenosyl-L-methionine-binding positions include leucine 72, glycine 104, and 123–128; that span reads LAKITL.

Belongs to the RNA methyltransferase RlmH family. Homodimer.

It is found in the cytoplasm. It carries out the reaction pseudouridine(1915) in 23S rRNA + S-adenosyl-L-methionine = N(3)-methylpseudouridine(1915) in 23S rRNA + S-adenosyl-L-homocysteine + H(+). Functionally, specifically methylates the pseudouridine at position 1915 (m3Psi1915) in 23S rRNA. This Mycoplasma capricolum subsp. capricolum (strain California kid / ATCC 27343 / NCTC 10154) protein is Ribosomal RNA large subunit methyltransferase H.